The primary structure comprises 176 residues: Ribosome maturation factor RimM (176 aa).

The region spanning Gly97–Phe176 is the PRC barrel domain.

Belongs to the RimM family. Binds ribosomal protein uS19.

The protein localises to the cytoplasm. Its function is as follows. An accessory protein needed during the final step in the assembly of 30S ribosomal subunit, possibly for assembly of the head region. Essential for efficient processing of 16S rRNA. May be needed both before and after RbfA during the maturation of 16S rRNA. It has affinity for free ribosomal 30S subunits but not for 70S ribosomes. This Pseudoalteromonas atlantica (strain T6c / ATCC BAA-1087) protein is Ribosome maturation factor RimM.